A 686-amino-acid chain; its full sequence is Putative cuticle collagen 99 (686 aa).

2 disordered regions span residues 42-79 (PPIG…PVGP) and 163-444 (GPIG…SLVA). The segment covering 67–79 (PPGPPGERGPVGP) has biased composition (pro residues). 3 triple-helical region regions span residues 142-201 (GMPG…KGDR), 230-263 (GPPG…GFDG), and 268-296 (GPKG…EKGD). Pro residues predominate over residues 231–243 (PPGPPGPPGPPGP). Basic and acidic residues predominate over residues 246-256 (RDGRHGMKGDR). A compositionally biased stretch (low complexity) spans 306 to 318 (GQSVSTVSSSGSQ). Composition is skewed to basic and acidic residues over residues 361-373 (EKGE…ETGD) and 401-417 (RDGR…HGLR). Positions 394-439 (GPPGPPGRDGRPGEKGEKGEHGLRGDMGLPGPEGTPGKRGRRGRHG) are triple-helical region. Asparagine 446 and asparagine 535 each carry an N-linked (GlcNAc...) asparagine glycan. The disordered stretch occupies residues 475-650 (KNVIPGPPGP…TGPDGLPLPY (176 aa)). Triple-helical region stretches follow at residues 479 to 536 (PGPP…SGNQ), 538 to 576 (GPRG…PGPM), and 577 to 636 (GLRG…PGLD). The segment covering 540–549 (RGPPGLPGPP) has biased composition (pro residues). Residues 563–581 (QPGALGLPGHPGPMGLRGP) are compositionally biased toward low complexity.

This sequence belongs to the cuticular collagen family. Collagen polypeptide chains are complexed within the cuticle by disulfide bonds and other types of covalent cross-links.

Its function is as follows. Nematode cuticles are composed largely of collagen-like proteins. The cuticle functions both as an exoskeleton and as a barrier to protect the worm from its environment. This Caenorhabditis briggsae protein is Putative cuticle collagen 99.